The chain runs to 388 residues: tRNA (guanine(26)-N(2))-dimethyltransferase (388 aa).

Residues 4 to 383 (KTIVEGTTKV…APITEIKEII (380 aa)) enclose the Trm1 methyltransferase domain. Residues R41, R78, D94, and A123 each coordinate S-adenosyl-L-methionine. The Zn(2+) site is built by C251, C254, C271, and C274.

The protein belongs to the class I-like SAM-binding methyltransferase superfamily. Trm1 family.

It carries out the reaction guanosine(26) in tRNA + 2 S-adenosyl-L-methionine = N(2)-dimethylguanosine(26) in tRNA + 2 S-adenosyl-L-homocysteine + 2 H(+). In terms of biological role, dimethylates a single guanine residue at position 26 of a number of tRNAs using S-adenosyl-L-methionine as donor of the methyl groups. This is tRNA (guanine(26)-N(2))-dimethyltransferase from Methanosarcina barkeri (strain Fusaro / DSM 804).